The following is a 397-amino-acid chain: Succinate--CoA ligase [ADP-forming] subunit beta (397 aa).

Residues 9 to 244 form the ATP-grasp domain; the sequence is KEIMKQYGIS…LTEEDPREVQ (236 aa). ATP contacts are provided by residues lysine 46, 53–55, glutamate 99, leucine 102, and glutamate 107; that span reads GRG. Positions 199 and 213 each coordinate Mg(2+). Substrate is bound by residues asparagine 264 and 321-323; that span reads GIM.

Belongs to the succinate/malate CoA ligase beta subunit family. In terms of assembly, heterotetramer of two alpha and two beta subunits. Mg(2+) is required as a cofactor.

The catalysed reaction is succinate + ATP + CoA = succinyl-CoA + ADP + phosphate. It catalyses the reaction GTP + succinate + CoA = succinyl-CoA + GDP + phosphate. The protein operates within carbohydrate metabolism; tricarboxylic acid cycle; succinate from succinyl-CoA (ligase route): step 1/1. Its function is as follows. Succinyl-CoA synthetase functions in the citric acid cycle (TCA), coupling the hydrolysis of succinyl-CoA to the synthesis of either ATP or GTP and thus represents the only step of substrate-level phosphorylation in the TCA. The beta subunit provides nucleotide specificity of the enzyme and binds the substrate succinate, while the binding sites for coenzyme A and phosphate are found in the alpha subunit. The chain is Succinate--CoA ligase [ADP-forming] subunit beta from Alkaliphilus metalliredigens (strain QYMF).